The primary structure comprises 884 residues: Coatomer subunit gamma-1 (884 aa).

5 HEAT repeats span residues 65-100 (VEAT…SPSS), 101-138 (DEVI…GTLL), 286-323 (RELA…TRPL), 325-357 (VTNC…TGNE), and 358-395 (SSVD…KFPL). Residues 592–612 (QPLQEKKAPGKKPPAGAPAPA) are disordered. Pro residues predominate over residues 602–612 (KKPPAGAPAPA).

Belongs to the COPG family. In terms of assembly, oligomeric complex that consists of at least the alpha, beta, beta', gamma, delta, epsilon and zeta subunits.

It localises to the cytoplasm. It is found in the golgi apparatus membrane. The protein resides in the cytoplasmic vesicle. The protein localises to the COPI-coated vesicle membrane. Its function is as follows. The coatomer is a cytosolic protein complex that binds to dilysine motifs and reversibly associates with Golgi non-clathrin-coated vesicles, which further mediate biosynthetic protein transport from the ER, via the Golgi up to the trans Golgi network. Coatomer complex is required for budding from Golgi membranes, and is essential for the retrograde Golgi-to-ER transport of dilysine-tagged proteins. This Oryza sativa subsp. japonica (Rice) protein is Coatomer subunit gamma-1.